The chain runs to 541 residues: Atlastin-3 (541 aa).

Residues 1–25 (MLSPQRVAAAASRGADDAMESSKPG) are N-terminal hypervariable region (HVR). The Cytoplasmic portion of the chain corresponds to 1–445 (MLSPQRVAAA…NVFSTFRTPA (445 aa)). Positions 57 to 305 (DLDVVVVSVA…LIPYVLNPSK (249 aa)) constitute a GB1/RHD3-type G domain. Residues R70, K71, G72, K73, S74, F75, and R109 each coordinate GDP. D142 is a binding site for Mg(2+). GDP contacts are provided by R213, D214, V272, and S275. The segment at 343-434 (MLQATAEANN…YENFCKHNGS (92 aa)) is 3HB (three-helix bundle) domain. K391 bears the N6-acetyllysine mark. The chain crosses the membrane as a helical span at residues 446–466 (VLFTGIVALYIASGLTGFIGL). Residue E467 is a topological domain, lumenal. A helical transmembrane segment spans residues 468 to 488 (VVAQLFNCMVGLLLIALLTWG). At 489–541 (YIRYSGQYRELGGAIDFGAAYVLEQASSHIGNSTQATVRDAVVGRPSMDKKAQ) the chain is on the cytoplasmic side. Position 535 is a phosphoserine (S535).

Belongs to the TRAFAC class dynamin-like GTPase superfamily. GB1/RHD3 GTPase family. GB1 subfamily. As to quaternary structure, monomeric and homodimeric. The homodimer, transiently formed by two molecules on opposing membranes, is the active form mediating ER membrane fusion. Interacts with ZFYVE27; both proteins are involved in endoplasmic reticulum tubular network organization. Interacts with REEP5; both proteins are involved in endoplasmic reticulum tubular network organization. Expressed in the central nervous system and in dorsal root ganglia neurons. Expressed in peripheral tissues (at protein level).

It localises to the endoplasmic reticulum membrane. It carries out the reaction GTP + H2O = GDP + phosphate + H(+). Functionally, atlastin-3 (ATL3) is a membrane-anchored GTPase that mediates the GTP-dependent fusion of endoplasmic reticulum (ER) membranes, maintaining the continuous ER network. It facilitates the formation of three-way junctions where ER tubules intersect. Two atlastin-3 on neighboring ER tubules bind GTP and form loose homodimers through the GB1/RHD3-type G domains and 3HB regions. Upon GTP hydrolysis, the 3HB regions tighten, pulling the membranes together to drive their fusion. After fusion, the homodimer disassembles upon release of inorganic phosphate (Pi). Subsequently, GDP dissociates, resetting the monomers to a conformation ready for a new fusion cycle. In Homo sapiens (Human), this protein is Atlastin-3.